Here is a 613-residue protein sequence, read N- to C-terminus: Proteasome-associated ATPase (613 aa).

The interval 1-29 (MSESERSEGFPEGFAGAGSGSLSSEDAAE) is disordered. The stretch at 23 to 100 (SSEDAAELEA…LREEVDRLGQ (78 aa)) forms a coiled coil. Position 300–305 (300–305 (GCGKTL)) interacts with ATP. Residue Lys-595 forms an Isoglutamyl lysine isopeptide (Lys-Gln) (interchain with Q-Cter in protein Pup) linkage. The docks into pockets in the proteasome alpha-ring stretch occupies residues 612 to 613 (YL).

The protein belongs to the AAA ATPase family. Homohexamer. Assembles into a hexameric ring structure that caps the 20S proteasome core. Strongly interacts with the prokaryotic ubiquitin-like protein Pup through a hydrophobic interface; the interacting region of ARC lies in its N-terminal coiled-coil domain. There is one Pup binding site per ARC hexamer ring. Upon ATP-binding, the C-terminus of ARC interacts with the alpha-rings of the proteasome core, possibly by binding to the intersubunit pockets.

The protein operates within protein degradation; proteasomal Pup-dependent pathway. ATPase which is responsible for recognizing, binding, unfolding and translocation of pupylated proteins into the bacterial 20S proteasome core particle. May be essential for opening the gate of the 20S proteasome via an interaction with its C-terminus, thereby allowing substrate entry and access to the site of proteolysis. Thus, the C-termini of the proteasomal ATPase may function like a 'key in a lock' to induce gate opening and therefore regulate proteolysis. The polypeptide is Proteasome-associated ATPase (Mycolicibacterium smegmatis (strain ATCC 700084 / mc(2)155) (Mycobacterium smegmatis)).